The sequence spans 321 residues: Glucokinase (321 aa).

Position 8-13 (glycine 8–threonine 13) interacts with ATP.

It belongs to the bacterial glucokinase family.

It is found in the cytoplasm. It catalyses the reaction D-glucose + ATP = D-glucose 6-phosphate + ADP + H(+). The sequence is that of Glucokinase from Escherichia fergusonii (strain ATCC 35469 / DSM 13698 / CCUG 18766 / IAM 14443 / JCM 21226 / LMG 7866 / NBRC 102419 / NCTC 12128 / CDC 0568-73).